Reading from the N-terminus, the 240-residue chain is Ribonuclease 3 (240 aa).

The region spanning 9–141 (VEEFQKETGI…LLAAIYLDQG (133 aa)) is the RNase III domain. Glu-54 is a binding site for Mg(2+). Residue Asp-58 is part of the active site. The Mg(2+) site is built by Asp-127 and Glu-130. The active site involves Glu-130. The 70-residue stretch at 168–237 (DYKTALQEIV…ARIAYEKLLK (70 aa)) folds into the DRBM domain.

Belongs to the ribonuclease III family. Homodimer. Mg(2+) serves as cofactor.

It is found in the cytoplasm. The catalysed reaction is Endonucleolytic cleavage to 5'-phosphomonoester.. Its function is as follows. Digests double-stranded RNA. Involved in the processing of primary rRNA transcript to yield the immediate precursors to the large and small rRNAs (23S and 16S). Also processes some mRNAs, and tRNAs when they are encoded in the rRNA operon. Probably processes pre-crRNA and tracrRNA of type II CRISPR loci if present in the organism. The polypeptide is Ribonuclease 3 (rnc) (Thermotoga maritima (strain ATCC 43589 / DSM 3109 / JCM 10099 / NBRC 100826 / MSB8)).